The sequence spans 769 residues: Non-secreted LysM effector LysM17 (769 aa).

Residues 173–193 form a helical membrane-spanning segment; it reads LPPLATAIPLAVVWASLASVI. N-linked (GlcNAc...) asparagine glycans are attached at residues asparagine 305, asparagine 368, asparagine 423, and asparagine 452. LysM domains are found at residues 498-543 and 562-610; these read RTIQ…HVCC and YSNL…KICL. Residues asparagine 631, asparagine 671, asparagine 706, and asparagine 734 are each glycosylated (N-linked (GlcNAc...) asparagine).

The protein belongs to the secreted LysM effector family.

It localises to the membrane. Its function is as follows. Non-secreted LysM effector that might be involved in manipulation of host defenses for successful infection. The sequence is that of Non-secreted LysM effector LysM17 from Penicillium expansum (Blue mold rot fungus).